The chain runs to 94 residues: Pyrimidine/purine nucleoside phosphorylase (94 aa).

The protein belongs to the nucleoside phosphorylase PpnP family.

The enzyme catalyses a purine D-ribonucleoside + phosphate = a purine nucleobase + alpha-D-ribose 1-phosphate. It carries out the reaction adenosine + phosphate = alpha-D-ribose 1-phosphate + adenine. It catalyses the reaction cytidine + phosphate = cytosine + alpha-D-ribose 1-phosphate. The catalysed reaction is guanosine + phosphate = alpha-D-ribose 1-phosphate + guanine. The enzyme catalyses inosine + phosphate = alpha-D-ribose 1-phosphate + hypoxanthine. It carries out the reaction thymidine + phosphate = 2-deoxy-alpha-D-ribose 1-phosphate + thymine. It catalyses the reaction uridine + phosphate = alpha-D-ribose 1-phosphate + uracil. The catalysed reaction is xanthosine + phosphate = alpha-D-ribose 1-phosphate + xanthine. Catalyzes the phosphorolysis of diverse nucleosides, yielding D-ribose 1-phosphate and the respective free bases. Can use uridine, adenosine, guanosine, cytidine, thymidine, inosine and xanthosine as substrates. Also catalyzes the reverse reactions. In Salmonella agona (strain SL483), this protein is Pyrimidine/purine nucleoside phosphorylase.